The following is a 132-amino-acid chain: Phosphoribosyl-AMP cyclohydrolase (132 aa).

A Mg(2+)-binding site is contributed by D89. C90 is a binding site for Zn(2+). Mg(2+) contacts are provided by D91 and D93. Zn(2+) contacts are provided by C106 and C113.

This sequence belongs to the PRA-CH family. Homodimer. It depends on Mg(2+) as a cofactor. Zn(2+) is required as a cofactor.

Its subcellular location is the cytoplasm. The catalysed reaction is 1-(5-phospho-beta-D-ribosyl)-5'-AMP + H2O = 1-(5-phospho-beta-D-ribosyl)-5-[(5-phospho-beta-D-ribosylamino)methylideneamino]imidazole-4-carboxamide. It functions in the pathway amino-acid biosynthesis; L-histidine biosynthesis; L-histidine from 5-phospho-alpha-D-ribose 1-diphosphate: step 3/9. In terms of biological role, catalyzes the hydrolysis of the adenine ring of phosphoribosyl-AMP. The sequence is that of Phosphoribosyl-AMP cyclohydrolase from Renibacterium salmoninarum (strain ATCC 33209 / DSM 20767 / JCM 11484 / NBRC 15589 / NCIMB 2235).